Here is a 573-residue protein sequence, read N- to C-terminus: Plasmepsin X (573 aa).

An N-terminal signal peptide occupies residues 1–26 (MKRISPLNTLFYLSLFFSYTFKGLKC). Residues 27–221 (TRIYKIGTKA…SSIEKNFIAL (195 aa)) constitute a propeptide that is removed on maturation. Disulfide bonds link cysteine 39–cysteine 51 and cysteine 42–cysteine 48. The segment at 167–211 (KGNKNFTNNENNSDNENNSDNENNSDNENNLDNENNLDNENNSDN) is disordered. Over residues 183 to 203 (NNSDNENNSDNENNLDNENNL) the composition is skewed to acidic residues. The 320-residue stretch at 248–567 (FVGELLVGTP…ESRPSMVGVA (320 aa)) folds into the Peptidase A1 domain. The active site involves aspartate 266. A disulfide bridge links cysteine 279 with cysteine 284. N-linked (GlcNAc...) asparagine glycosylation is present at asparagine 334. An intrachain disulfide couples cysteine 447 to cysteine 448. Aspartate 457 is a catalytic residue. Residues cysteine 482 and cysteine 521 are joined by a disulfide bond.

The protein belongs to the peptidase A1 family. Post-translationally, autocleaved into a p16 prodomain form and two mature forms p44 and p51.

Its subcellular location is the cytoplasmic vesicle. It is found in the secretory vesicle. With respect to regulation, inhibited by aminohydantoin compounds such as CWHM-117. Functionally, during the asexual blood stage, processes key proteins essential for merozoite egress and invasion of host erythrocytes. Cleaves and activates proteases SUB1 and SUB2. May process members of the EBL and Rh protein families. Also cleaves apical membrane protein AMA1. During the mosquito vector stage and probably in ookinetes, cleaves CelTOS. This is Plasmepsin X from Plasmodium falciparum (isolate NF54).